Here is a 261-residue protein sequence, read N- to C-terminus: Putative glyoxylase CFP32 (261 aa).

2 consecutive VOC domains span residues 11-129 (TPNW…LWQA) and 143-257 (TLIW…VLKP). Glyoxalase stretches follow at residues 13 to 123 (NWVD…TGAA) and 149 to 252 (LLTD…GAIF).

The polypeptide is Putative glyoxylase CFP32 (Mycobacterium bovis (strain ATCC BAA-935 / AF2122/97)).